The primary structure comprises 227 residues: 2-C-methyl-D-erythritol 4-phosphate cytidylyltransferase (227 aa).

It belongs to the IspD/TarI cytidylyltransferase family. IspD subfamily.

The catalysed reaction is 2-C-methyl-D-erythritol 4-phosphate + CTP + H(+) = 4-CDP-2-C-methyl-D-erythritol + diphosphate. It participates in isoprenoid biosynthesis; isopentenyl diphosphate biosynthesis via DXP pathway; isopentenyl diphosphate from 1-deoxy-D-xylulose 5-phosphate: step 2/6. Its function is as follows. Catalyzes the formation of 4-diphosphocytidyl-2-C-methyl-D-erythritol from CTP and 2-C-methyl-D-erythritol 4-phosphate (MEP). This is 2-C-methyl-D-erythritol 4-phosphate cytidylyltransferase from Bordetella bronchiseptica (strain ATCC BAA-588 / NCTC 13252 / RB50) (Alcaligenes bronchisepticus).